The sequence spans 58 residues: MAGAKVKTEQIHLQCTECKRKNYITTKNKQNVPEKLELKKYCPHDKKHTIHKELKVSR.

This sequence belongs to the bacterial ribosomal protein bL33 family.

The polypeptide is Large ribosomal subunit protein bL33 (Brachyspira hyodysenteriae (strain ATCC 49526 / WA1)).